The chain runs to 418 residues: Deoxyribonuclease Tat-D (418 aa).

Residues Glu185, His226, His277, and Asp327 each contribute to the a divalent metal cation site.

The protein belongs to the metallo-dependent hydrolases superfamily. TatD-type hydrolase family. The cofactor is Mg(2+).

It is found in the cytoplasm. Its function is as follows. Has both endo- and exonuclease activities. Incises double-stranded DNA without obvious specificity via its endonuclease activity and excises the DNA from the 3'-to 5'-end by its exonuclease activity. May have a role in apoptosis. The protein is Deoxyribonuclease Tat-D of Saccharomyces cerevisiae (strain ATCC 204508 / S288c) (Baker's yeast).